Reading from the N-terminus, the 181-residue chain is uncharacterized protein (181 aa).

The 141-residue stretch at leucine 35–serine 175 folds into the Nudix hydrolase domain. The Nudix box signature appears at glycine 72 to glycine 94. Residues glutamate 88 and glutamate 92 each contribute to the Mg(2+) site.

Belongs to the Nudix hydrolase family. Mg(2+) is required as a cofactor.

This is an uncharacterized protein from Streptomyces coelicolor (strain ATCC BAA-471 / A3(2) / M145).